Here is a 281-residue protein sequence, read N- to C-terminus: Ribosomal protein L11 methyltransferase (281 aa).

Thr133, Gly154, Asp175, and Asn216 together coordinate S-adenosyl-L-methionine.

It belongs to the methyltransferase superfamily. PrmA family.

It localises to the cytoplasm. The catalysed reaction is L-lysyl-[protein] + 3 S-adenosyl-L-methionine = N(6),N(6),N(6)-trimethyl-L-lysyl-[protein] + 3 S-adenosyl-L-homocysteine + 3 H(+). In terms of biological role, methylates ribosomal protein L11. The chain is Ribosomal protein L11 methyltransferase from Campylobacter jejuni subsp. jejuni serotype O:2 (strain ATCC 700819 / NCTC 11168).